The following is a 340-amino-acid chain: Histidinol-phosphate aminotransferase (340 aa).

An N6-(pyridoxal phosphate)lysine modification is found at K204.

Belongs to the class-II pyridoxal-phosphate-dependent aminotransferase family. Histidinol-phosphate aminotransferase subfamily. Pyridoxal 5'-phosphate serves as cofactor.

The catalysed reaction is L-histidinol phosphate + 2-oxoglutarate = 3-(imidazol-4-yl)-2-oxopropyl phosphate + L-glutamate. Its pathway is amino-acid biosynthesis; L-histidine biosynthesis; L-histidine from 5-phospho-alpha-D-ribose 1-diphosphate: step 7/9. This is Histidinol-phosphate aminotransferase from Thermococcus gammatolerans (strain DSM 15229 / JCM 11827 / EJ3).